The chain runs to 164 residues: Protein-export protein SecB (164 aa).

This sequence belongs to the SecB family. Homotetramer, a dimer of dimers. One homotetramer interacts with 1 SecA dimer.

Its subcellular location is the cytoplasm. One of the proteins required for the normal export of preproteins out of the cell cytoplasm. It is a molecular chaperone that binds to a subset of precursor proteins, maintaining them in a translocation-competent state. It also specifically binds to its receptor SecA. The polypeptide is Protein-export protein SecB (Orientia tsutsugamushi (strain Ikeda) (Rickettsia tsutsugamushi)).